The primary structure comprises 907 residues: Whirlin (907 aa).

Positions 140–223 (LVSLRRAKAH…LVLSVYSAGR (84 aa)) constitute a PDZ 1 domain. Positions 243 to 264 (SISPPSGLPQPHGGALRQQEGD) are disordered. In terms of domain architecture, PDZ 2 spans 279 to 361 (KVNLVLGDGR…LILTVKDVGR (83 aa)). 4 disordered regions span residues 502 to 540 (SMKA…TVSS), 565 to 663 (SVDD…SSKR), 684 to 717 (QSPP…QTGT), and 742 to 815 (PQTR…PTST). The segment covering 521–540 (SYSDTGSSTGSHGTSTTVSS) has biased composition (low complexity). Polar residues predominate over residues 609–626 (PPSSMPSCSGTVFSAPQN). Residues 628–642 (SPPAGTAPTPGTSSA) are compositionally biased toward low complexity. Phosphoserine is present on serine 685. The segment covering 743-762 (QTRTASTLSQLSDSGQTLSE) has biased composition (polar residues). The span at 789–800 (SSKELPRNERPT) shows a compositional bias: basic and acidic residues. The PDZ 3 domain maps to 816-899 (LVRVKKSAAT…TKDRDYIDFL (84 aa)).

Forms homooligomers. Interacts (via C-terminal PDZ domain) with MYO15A; this interaction is necessary for localization of WHRN to stereocilia tips. Interacts (via C-terminal PDZ domain) with MPP1/p55. Interacts with LRRC4C/NGL1. Interacts with MYO7A. Interacts with RPGR. Interacts with EPS8. Interacts with CASK. Interacts with CIB2. Component of USH2 complex, composed of ADGRV1, PDZD7, USH2A and WHRN. Interacts (via PDZ domains) with PDZD7; the interaction is direct. Interacts (via N-terminal PDZ domain) with USH2A (via cytoplasmic region). Interacts with ADGRV1/MASS1 (via cytoplasmic region).

Its subcellular location is the cytoplasm. It localises to the cell projection. It is found in the stereocilium. The protein resides in the growth cone. The protein localises to the photoreceptor inner segment. Its subcellular location is the synapse. Its function is as follows. Involved in hearing and vision as member of the USH2 complex. Necessary for elongation and maintenance of inner and outer hair cell stereocilia in the organ of Corti in the inner ear. Involved in the maintenance of the hair bundle ankle region, which connects stereocilia in cochlear hair cells of the inner ear. In retina photoreceptors, required for the maintenance of periciliary membrane complex that seems to play a role in regulating intracellular protein transport. The polypeptide is Whirlin (Homo sapiens (Human)).